The primary structure comprises 79 residues: Sulfur carrier protein TusA (79 aa).

Cysteine 16 acts as the Cysteine persulfide intermediate in catalysis.

The protein belongs to the sulfur carrier protein TusA family.

The protein localises to the cytoplasm. Sulfur carrier protein which probably makes part of a sulfur-relay system. The protein is Sulfur carrier protein TusA of Pseudomonas aeruginosa (strain LESB58).